The sequence spans 281 residues: Mad-like protein 1 (281 aa).

Residues 71-80 are compositionally biased toward low complexity; that stretch reads SCASNASTSS. The tract at residues 71–105 is disordered; it reads SCASNASTSSQPYCSSPPARKSSKHSRTAHNELEK. Residues 95–108 form a basic motif region; sequence HSRTAHNELEKTRR. A bHLH domain is found at 95–147; that stretch reads HSRTAHNELEKTRRANLRGCLETLKMLVPCVSDATRNTTLALLTRARDHIIEL. Residues 109–147 are helix-loop-helix motif; sequence ANLRGCLETLKMLVPCVSDATRNTTLALLTRARDHIIEL. Residues 144–185 adopt a coiled-coil conformation; the sequence is IIELQDSNAAQMKKLNDLRDEQDELVAELAQLQADEEVAQAT. The tract at residues 189–213 is disordered; that stretch reads CQTLSQSRPESRASSFTSTSSRDSP. Over residues 200–212 the composition is skewed to low complexity; the sequence is RASSFTSTSSRDS.

In terms of assembly, forms heterodimer with mxl-1 in the presence and absence of DNA. In terms of processing, ubiquitinated. As to expression, expressed in intestinal cells in adults. Expressed in D-type motor neuron cell bodies.

The protein localises to the nucleus. In terms of biological role, transcriptional regulator which binds to the E box motif 5'-CACGTG-3', when in a heterodimeric complex with mxl-1. Involved in the control of lifespan in response to dietary restriction, the decline in protein homeostasis associated with normal aging, germline signaling and may overlap with the insulin-like signaling pathway. Plays a role in autophagy. Involved in promoting infection by the microsporidian pathogen N.parisii, possibly together with transcription factors pha-4 and zip-10. In response to neuronal injury, mdl-1 is targeted by sdz-33 for ubiquitin-mediated degradation, probably thereby reducing levels of mdl-1-mxl-1 heterodimers, allowing free mxl-1 to form complexes with tdpt-1 and thus inhibiting tdpt-1-dependent sumoylation of ets-4. In Caenorhabditis elegans, this protein is Mad-like protein 1.